Here is a 128-residue protein sequence, read N- to C-terminus: Ribosome-binding factor A (128 aa).

It belongs to the RbfA family. As to quaternary structure, monomer. Binds 30S ribosomal subunits, but not 50S ribosomal subunits or 70S ribosomes.

It localises to the cytoplasm. One of several proteins that assist in the late maturation steps of the functional core of the 30S ribosomal subunit. Associates with free 30S ribosomal subunits (but not with 30S subunits that are part of 70S ribosomes or polysomes). Required for efficient processing of 16S rRNA. May interact with the 5'-terminal helix region of 16S rRNA. The protein is Ribosome-binding factor A of Acidithiobacillus ferrooxidans (strain ATCC 23270 / DSM 14882 / CIP 104768 / NCIMB 8455) (Ferrobacillus ferrooxidans (strain ATCC 23270)).